We begin with the raw amino-acid sequence, 339 residues long: Anthranilate phosphoribosyltransferase (339 aa).

Residues Gly-79, 82 to 83 (GD), Thr-87, 89 to 92 (NVST), 107 to 115 (KHGNRAVSS), and Ser-119 each bind 5-phospho-alpha-D-ribose 1-diphosphate. Gly-79 provides a ligand contact to anthranilate. Ser-91 is a binding site for Mg(2+). Asn-110 serves as a coordination point for anthranilate. Arg-165 is an anthranilate binding site. The Mg(2+) site is built by Asp-224 and Glu-225.

Belongs to the anthranilate phosphoribosyltransferase family. Homodimer. Mg(2+) is required as a cofactor.

The enzyme catalyses N-(5-phospho-beta-D-ribosyl)anthranilate + diphosphate = 5-phospho-alpha-D-ribose 1-diphosphate + anthranilate. It functions in the pathway amino-acid biosynthesis; L-tryptophan biosynthesis; L-tryptophan from chorismate: step 2/5. Its function is as follows. Catalyzes the transfer of the phosphoribosyl group of 5-phosphorylribose-1-pyrophosphate (PRPP) to anthranilate to yield N-(5'-phosphoribosyl)-anthranilate (PRA). The polypeptide is Anthranilate phosphoribosyltransferase (Geobacillus kaustophilus (strain HTA426)).